Here is a 600-residue protein sequence, read N- to C-terminus: Arginine--tRNA ligase (600 aa).

Residues 151 to 153, His162, Tyr332, Asp336, and Gln360 contribute to the L-arginine site; that span reads SPN. The 'HIGH' region signature appears at 152 to 162; the sequence is PNIAKEMHIGH.

It belongs to the class-I aminoacyl-tRNA synthetase family.

It catalyses the reaction tRNA(Arg) + L-arginine + ATP = L-arginyl-tRNA(Arg) + AMP + diphosphate. The chain is Arginine--tRNA ligase (RARS) from Acanthamoeba polyphaga mimivirus (APMV).